A 217-amino-acid polypeptide reads, in one-letter code: 3,4-dihydroxy-2-butanone 4-phosphate synthase (217 aa).

D-ribulose 5-phosphate is bound by residues arginine 37–glutamate 38, aspartate 42, arginine 150–threonine 154, and glutamate 174. Residue glutamate 38 coordinates Mg(2+). Histidine 153 is a Mg(2+) binding site.

Belongs to the DHBP synthase family. Homodimer. It depends on Mg(2+) as a cofactor. The cofactor is Mn(2+).

The enzyme catalyses D-ribulose 5-phosphate = (2S)-2-hydroxy-3-oxobutyl phosphate + formate + H(+). It functions in the pathway cofactor biosynthesis; riboflavin biosynthesis; 2-hydroxy-3-oxobutyl phosphate from D-ribulose 5-phosphate: step 1/1. Catalyzes the conversion of D-ribulose 5-phosphate to formate and 3,4-dihydroxy-2-butanone 4-phosphate. This Yersinia enterocolitica serotype O:8 / biotype 1B (strain NCTC 13174 / 8081) protein is 3,4-dihydroxy-2-butanone 4-phosphate synthase.